We begin with the raw amino-acid sequence, 240 residues long: Ribosomal RNA small subunit methyltransferase G (240 aa).

Residues G77, F82, 128–129 (AE), and R148 contribute to the S-adenosyl-L-methionine site. The tract at residues 217-240 (EKRSKTPKKYPRKAGTPNKSPLLK) is disordered.

It belongs to the methyltransferase superfamily. RNA methyltransferase RsmG family.

The protein resides in the cytoplasm. Its function is as follows. Specifically methylates the N7 position of guanine in position 535 of 16S rRNA. The protein is Ribosomal RNA small subunit methyltransferase G of Staphylococcus carnosus (strain TM300).